The following is a 36-amino-acid chain: Protein YnfP (36 aa).

This is Protein YnfP from Escherichia coli (strain K12).